We begin with the raw amino-acid sequence, 175 residues long: uncharacterized protein (175 aa).

The segment at Gln-71–Ala-166 adopts a DNL-type zinc-finger fold. 4 residues coordinate Zn(2+): Cys-82, Cys-85, Cys-107, and Cys-110.

This is an uncharacterized protein from Schizosaccharomyces pombe (strain 972 / ATCC 24843) (Fission yeast).